The sequence spans 439 residues: Adenylosuccinate synthetase (439 aa).

Residues Gly-13 to Lys-19 and Gly-41 to Thr-43 each bind GTP. Residue Asp-14 is the Proton acceptor of the active site. Asp-14 and Gly-41 together coordinate Mg(2+). Residues Asp-14–Lys-17, Asn-39–His-42, Thr-130, Arg-144, Gln-226, Thr-241, and Arg-313 contribute to the IMP site. His-42 acts as the Proton donor in catalysis. Ala-309–Arg-315 is a substrate binding site. Residues Arg-315, Lys-341–Asp-343, and Ser-422–Gly-424 each bind GTP.

The protein belongs to the adenylosuccinate synthetase family. In terms of assembly, homodimer. Requires Mg(2+) as cofactor.

Its subcellular location is the cytoplasm. The catalysed reaction is IMP + L-aspartate + GTP = N(6)-(1,2-dicarboxyethyl)-AMP + GDP + phosphate + 2 H(+). The protein operates within purine metabolism; AMP biosynthesis via de novo pathway; AMP from IMP: step 1/2. In terms of biological role, plays an important role in the de novo pathway of purine nucleotide biosynthesis. Catalyzes the first committed step in the biosynthesis of AMP from IMP. The chain is Adenylosuccinate synthetase from Acinetobacter baylyi (strain ATCC 33305 / BD413 / ADP1).